Consider the following 338-residue polypeptide: Fructose-1,6-bisphosphatase class 1 1 (338 aa).

Mg(2+)-binding residues include E91, D113, L115, and D116. Substrate-binding positions include 116–119 (DGSS), N208, and K274. E280 serves as a coordination point for Mg(2+).

Belongs to the FBPase class 1 family. Homotetramer. Mg(2+) is required as a cofactor.

Its subcellular location is the cytoplasm. The catalysed reaction is beta-D-fructose 1,6-bisphosphate + H2O = beta-D-fructose 6-phosphate + phosphate. It functions in the pathway carbohydrate biosynthesis; gluconeogenesis. In Cupriavidus taiwanensis (strain DSM 17343 / BCRC 17206 / CCUG 44338 / CIP 107171 / LMG 19424 / R1) (Ralstonia taiwanensis (strain LMG 19424)), this protein is Fructose-1,6-bisphosphatase class 1 1.